The sequence spans 86 residues: Large ribosomal subunit protein bL31 (86 aa).

The tract at residues 64–86 (KYGMGSANSSESKDQKEEKDSKK) is disordered. A compositionally biased stretch (basic and acidic residues) spans 74 to 86 (ESKDQKEEKDSKK).

Belongs to the bacterial ribosomal protein bL31 family. Type A subfamily. In terms of assembly, part of the 50S ribosomal subunit.

Its function is as follows. Binds the 23S rRNA. The protein is Large ribosomal subunit protein bL31 of Prochlorococcus marinus (strain MIT 9301).